A 268-amino-acid polypeptide reads, in one-letter code: MFSEYLKFFLYGLIQGLTEFFPVSSTAHLKVISVFFGIDDPGPSLSAIIQLGSVLALVCYFRNDFFKLKIQSSKKIFDYLIHERLLRSIFIGTIPIILLGGTIKLFVPYFFDEIFRSNLSIALVSFLMAILMYIADRSKKGSINLKNHKYSDSFLIGLSQALAIFPGVSRSGVTISTALLSGWGRSDSAKFSFLLGMPAISFAAIVEFISSFNAFSSFSFFPLIVGLTTTFLSSLLAIHFLLKYFSSNGLKLFIIYRIVFGFVILLNL.

7 consecutive transmembrane segments (helical) span residues 41 to 61 (PGPSLSAIIQLGSVLALVCYF), 89 to 109 (IFIGTIPIILLGGTIKLFVPY), 114 to 134 (IFRSNLSIALVSFLMAILMYI), 155 to 175 (LIGLSQALAIFPGVSRSGVTI), 191 to 211 (FSFLLGMPAISFAAIVEFISS), 218 to 238 (FSFFPLIVGLTTTFLSSLLAI), and 248 to 268 (NGLKLFIIYRIVFGFVILLNL).

The protein belongs to the UppP family.

It localises to the cell inner membrane. It catalyses the reaction di-trans,octa-cis-undecaprenyl diphosphate + H2O = di-trans,octa-cis-undecaprenyl phosphate + phosphate + H(+). Catalyzes the dephosphorylation of undecaprenyl diphosphate (UPP). Confers resistance to bacitracin. This is Undecaprenyl-diphosphatase from Prochlorococcus marinus (strain MIT 9312).